The chain runs to 164 residues: Phosphopantetheine adenylyltransferase (164 aa).

Ser-10 provides a ligand contact to substrate. Residues 10 to 11 (SF) and His-18 each bind ATP. Substrate contacts are provided by Lys-42, Met-74, and Arg-88. ATP-binding positions include 89 to 91 (GLR), Glu-99, and 124 to 130 (YFFVSAR).

This sequence belongs to the bacterial CoaD family. As to quaternary structure, homohexamer. It depends on Mg(2+) as a cofactor.

Its subcellular location is the cytoplasm. The catalysed reaction is (R)-4'-phosphopantetheine + ATP + H(+) = 3'-dephospho-CoA + diphosphate. The protein operates within cofactor biosynthesis; coenzyme A biosynthesis; CoA from (R)-pantothenate: step 4/5. Its function is as follows. Reversibly transfers an adenylyl group from ATP to 4'-phosphopantetheine, yielding dephospho-CoA (dPCoA) and pyrophosphate. The protein is Phosphopantetheine adenylyltransferase of Anaeromyxobacter dehalogenans (strain 2CP-C).